The chain runs to 380 residues: Protein Wnt-5a (380 aa).

Positions 1 to 35 (MKKSIGILSPGVALGMAGSAMSSKFFLVALAIFFS) are cleaved as a signal peptide. Residues 36 to 61 (FAQVVIEANSWWSLGMNNPVQMSEVY) constitute a propeptide that is removed on maturation. The cysteines at positions 104 and 115 are disulfide-linked. N-linked (GlcNAc...) asparagine glycans are attached at residues Asn-114 and Asn-120. Intrachain disulfides connect Cys-154/Cys-162, Cys-164/Cys-182, Cys-238/Cys-252, Cys-240/Cys-247, Cys-309/Cys-340, Cys-325/Cys-335, Cys-339/Cys-379, Cys-355/Cys-370, Cys-357/Cys-367, and Cys-362/Cys-363. Ser-244 carries the O-palmitoleoyl serine; by PORCN lipid modification. N-linked (GlcNAc...) asparagine glycans are attached at residues Asn-312 and Asn-326.

Belongs to the Wnt family. Forms a soluble 1:1 complex with AFM; this prevents oligomerization and is required for prolonged biological activity. The complex with AFM may represent the physiological form in body fluids. Homooligomer; disulfide-linked, leading to inactivation (in vitro). Interacts with PORCN. Interacts with WLS. Interacts with glypican GCP3. Interacts with PKD1 (via extracellular domain). Interacts with TMEM67. In terms of processing, glycosylation is necessary for secretion but not for activity. Palmitoleoylation is required for efficient binding to frizzled receptors. Depalmitoleoylation leads to Wnt signaling pathway inhibition. Post-translationally, proteolytic processing by TIKI1 and TIKI2 promotes oxidation and formation of large disulfide-bond oligomers, leading to inactivation of WNT5A. As to expression, expression is increased in differentiated thyroid carcinomas compared to normal thyroid tissue and anaplastic thyroid tumors where expression is low or undetectable. Expression is found in thyrocytes but not in stromal cells (at protein level). Detected in neonate heart and lung.

It is found in the secreted. The protein localises to the extracellular space. Its subcellular location is the extracellular matrix. In terms of biological role, ligand for members of the frizzled family of seven transmembrane receptors. Can activate or inhibit canonical Wnt signaling, depending on receptor context. In the presence of FZD4, activates beta-catenin signaling. In the presence of ROR2, inhibits the canonical Wnt pathway by promoting beta-catenin degradation through a GSK3-independent pathway which involves down-regulation of beta-catenin-induced reporter gene expression. Suppression of the canonical pathway allows chondrogenesis to occur and inhibits tumor formation. Stimulates cell migration. Decreases proliferation, migration, invasiveness and clonogenicity of carcinoma cells and may act as a tumor suppressor. Mediates motility of melanoma cells. Required during embryogenesis for extension of the primary anterior-posterior axis and for outgrowth of limbs and the genital tubercle. Inhibits type II collagen expression in chondrocytes. This is Protein Wnt-5a (WNT5A) from Homo sapiens (Human).